Consider the following 358-residue polypeptide: DNA polymerase IV (358 aa).

A UmuC domain is found at 4-185; it reads IIHIDMDCYF…LSLRKIPGVG (182 aa). Residues D8 and D103 each contribute to the Mg(2+) site. E104 is a catalytic residue.

It belongs to the DNA polymerase type-Y family. Monomer. Requires Mg(2+) as cofactor.

Its subcellular location is the cytoplasm. It catalyses the reaction DNA(n) + a 2'-deoxyribonucleoside 5'-triphosphate = DNA(n+1) + diphosphate. Functionally, poorly processive, error-prone DNA polymerase involved in untargeted mutagenesis. Copies undamaged DNA at stalled replication forks, which arise in vivo from mismatched or misaligned primer ends. These misaligned primers can be extended by PolIV. Exhibits no 3'-5' exonuclease (proofreading) activity. May be involved in translesional synthesis, in conjunction with the beta clamp from PolIII. In Shewanella baltica (strain OS155 / ATCC BAA-1091), this protein is DNA polymerase IV.